The chain runs to 831 residues: Phosphoinositide phosphatase SAC4 (831 aa).

Residues 162 to 551 enclose the SAC domain; that stretch reads LCMVDLTKDF…GDTLAYQYGG (390 aa). The interval 439–475 is disordered; it reads SDADTSPHNSSDDDSRDYDSLEKNCRPSKNVANGDYD. The span at 448–463 shows a compositional bias: basic and acidic residues; that stretch reads SSDDDSRDYDSLEKNC. The Phosphatase catalytic core signature appears at 487 to 498; it reads RTNCIDCLDRTN. Residues 785–805 are disordered; the sequence is PAMRESGSSSRKGKEPVETEL. A compositionally biased stretch (basic and acidic residues) spans 796–805; sequence KGKEPVETEL.

Component of the PI(3,5)P2 regulatory complex at least composed of ATG18, SAC/FIG4, FAB1 and VAC14. The cofactor is Mg(2+). In terms of tissue distribution, ubiquitous with a higher level of expression in young seedlings than in other tissues.

The protein resides in the vacuole membrane. The catalysed reaction is a 1,2-diacyl-sn-glycero-3-phospho-(1D-myo-inositol-3,5-bisphosphate) + H2O = a 1,2-diacyl-sn-glycero-3-phospho-(1D-myo-inositol-3-phosphate) + phosphate. In terms of biological role, the PI(3,5)P2 regulatory complex regulates both the synthesis and turnover of phosphatidylinositol 3,5-bisphosphate (PtdIns(3,5)P2). The chain is Phosphoinositide phosphatase SAC4 (SAC4) from Arabidopsis thaliana (Mouse-ear cress).